The following is a 424-amino-acid chain: O-methyltransferase aunD (424 aa).

Aspartate 275 contributes to the S-adenosyl-L-methionine binding site. Histidine 326 functions as the Proton acceptor in the catalytic mechanism.

This sequence belongs to the class I-like SAM-binding methyltransferase superfamily. Cation-independent O-methyltransferase family.

It functions in the pathway secondary metabolite biosynthesis. Its function is as follows. O-methyltransferase; part of the gene cluster that mediates the biosynthesis of aurasperone B, a dimeric gamma-naphthopyrone. The first step in the biosynthesis of aurasperone B is the production of gamma-naphthopyrone precursor YWA1 by the non-reducing polyketide synthase albA, via condensation of one acetyl-CoA starter unit with 6 malonyl-CoA units. YWA1 is then methylated by aunE at position C-6 to yield foncesin which is further methylated at position C-8 by aunD to produce fonsecin B. A key enzyme in the biosynthetic pathway is the cytochrome P450 monooxygenase aunB which catalyzes the oxidative dimerization of fonsecin B to aurasperone B. AunB also catalyzes the oxidative dimerization of rubrofusarin B into aurasperone A. The polypeptide is O-methyltransferase aunD (Aspergillus niger (strain ATCC MYA-4892 / CBS 513.88 / FGSC A1513)).